A 156-amino-acid polypeptide reads, in one-letter code: Ribonuclease pancreatic (156 aa).

The first 28 residues, 1-28 (MALEKSLVLLPLLVLILLVLGWVQPSLG), serve as a signal peptide directing secretion. Residues 33–43 (AKKFQRQHVDS) show a composition bias toward basic and acidic residues. Residues 33–53 (AKKFQRQHVDSDSSPSSSSTY) are disordered. Residues lysine 35 and arginine 38 each coordinate substrate. The active-site Proton acceptor is histidine 40. 4 disulfide bridges follow: cysteine 54/cysteine 112, cysteine 68/cysteine 123, cysteine 86/cysteine 138, and cysteine 93/cysteine 100. N-linked (GlcNAc...) asparagine glycosylation is present at asparagine 62. Substrate is bound by residues 69-73 (KPVNT) and lysine 94. Asparagine 104 carries an N-linked (GlcNAc...) asparagine glycan. Arginine 113 provides a ligand contact to substrate. Residue asparagine 116 is glycosylated (N-linked (GlcNAc...) asparagine). Catalysis depends on histidine 147, which acts as the Proton donor.

Belongs to the pancreatic ribonuclease family. As to quaternary structure, monomer. Interacts with and forms tight 1:1 complexes with RNH1. Dimerization of two such complexes may occur. Interaction with RNH1 inhibits this protein. In terms of tissue distribution, pancreas and other tissues and body fluids (indicating it may have other physiological functions besides its role in digestion).

The protein resides in the secreted. It carries out the reaction an [RNA] containing cytidine + H2O = an [RNA]-3'-cytidine-3'-phosphate + a 5'-hydroxy-ribonucleotide-3'-[RNA].. The enzyme catalyses an [RNA] containing uridine + H2O = an [RNA]-3'-uridine-3'-phosphate + a 5'-hydroxy-ribonucleotide-3'-[RNA].. Endonuclease that catalyzes the cleavage of RNA on the 3' side of pyrimidine nucleotides. Acts on single-stranded and double-stranded RNA. The chain is Ribonuclease pancreatic (RNASE1) from Pan troglodytes (Chimpanzee).